A 436-amino-acid polypeptide reads, in one-letter code: Anaerobic glycerol-3-phosphate dehydrogenase subunit B (436 aa).

It belongs to the anaerobic G-3-P dehydrogenase subunit B family. Composed of a catalytic GlpA/B dimer and of membrane bound GlpC. It depends on FMN as a cofactor.

The enzyme catalyses a quinone + sn-glycerol 3-phosphate = dihydroxyacetone phosphate + a quinol. It participates in polyol metabolism; glycerol degradation via glycerol kinase pathway; glycerone phosphate from sn-glycerol 3-phosphate (anaerobic route): step 1/1. Its function is as follows. Conversion of glycerol 3-phosphate to dihydroxyacetone. Uses fumarate or nitrate as electron acceptor. This is Anaerobic glycerol-3-phosphate dehydrogenase subunit B from Vibrio cholerae serotype O1 (strain ATCC 39315 / El Tor Inaba N16961).